The sequence spans 364 residues: Coproporphyrin III ferrochelatase (364 aa).

Positions 29 and 118 each coordinate Fe-coproporphyrin III. Fe(2+)-binding residues include His-169 and Glu-250.

The protein belongs to the ferrochelatase family.

It is found in the cytoplasm. It catalyses the reaction Fe-coproporphyrin III + 2 H(+) = coproporphyrin III + Fe(2+). Its pathway is porphyrin-containing compound metabolism; protoheme biosynthesis. Involved in coproporphyrin-dependent heme b biosynthesis. Catalyzes the insertion of ferrous iron into coproporphyrin III to form Fe-coproporphyrin III. This is Coproporphyrin III ferrochelatase from Streptococcus pneumoniae serotype 2 (strain D39 / NCTC 7466).